We begin with the raw amino-acid sequence, 414 residues long: Adenylosuccinate synthetase (414 aa).

Residues 12-18 (GDEGKGK) and 40-42 (GHT) each bind GTP. Asp13 acts as the Proton acceptor in catalysis. Residues Asp13 and Gly40 each coordinate Mg(2+). IMP-binding positions include 13-16 (DEGK), 38-41 (NAGH), Thr124, Arg138, Gln216, Thr231, and Arg297. His41 serves as the catalytic Proton donor. 293 to 299 (STTGRPR) serves as a coordination point for substrate. Residues Arg299, 325–327 (KLD), and 403–405 (STG) contribute to the GTP site.

It belongs to the adenylosuccinate synthetase family. Homodimer. The cofactor is Mg(2+).

The protein resides in the cytoplasm. The enzyme catalyses IMP + L-aspartate + GTP = N(6)-(1,2-dicarboxyethyl)-AMP + GDP + phosphate + 2 H(+). The protein operates within purine metabolism; AMP biosynthesis via de novo pathway; AMP from IMP: step 1/2. Functionally, plays an important role in the de novo pathway of purine nucleotide biosynthesis. Catalyzes the first committed step in the biosynthesis of AMP from IMP. The chain is Adenylosuccinate synthetase from Hydrogenobaculum sp. (strain Y04AAS1).